A 304-amino-acid polypeptide reads, in one-letter code: Protoheme IX farnesyltransferase 1 (304 aa).

A run of 8 helical transmembrane segments spans residues Val24–Leu44, Phe47–Ala67, Met99–Thr119, Leu122–Leu142, Ile150–Gly170, Pro176–Ile196, Leu228–Leu248, and Tyr280–Leu300.

It belongs to the UbiA prenyltransferase family. Protoheme IX farnesyltransferase subfamily.

It localises to the cell inner membrane. It carries out the reaction heme b + (2E,6E)-farnesyl diphosphate + H2O = Fe(II)-heme o + diphosphate. It functions in the pathway porphyrin-containing compound metabolism; heme O biosynthesis; heme O from protoheme: step 1/1. Converts heme B (protoheme IX) to heme O by substitution of the vinyl group on carbon 2 of heme B porphyrin ring with a hydroxyethyl farnesyl side group. The polypeptide is Protoheme IX farnesyltransferase 1 (Pseudomonas paraeruginosa (strain DSM 24068 / PA7) (Pseudomonas aeruginosa (strain PA7))).